We begin with the raw amino-acid sequence, 100 residues long: Glutamyl-tRNA(Gln) amidotransferase subunit C (100 aa).

The protein belongs to the GatC family. In terms of assembly, heterotrimer of A, B and C subunits.

The catalysed reaction is L-glutamyl-tRNA(Gln) + L-glutamine + ATP + H2O = L-glutaminyl-tRNA(Gln) + L-glutamate + ADP + phosphate + H(+). It carries out the reaction L-aspartyl-tRNA(Asn) + L-glutamine + ATP + H2O = L-asparaginyl-tRNA(Asn) + L-glutamate + ADP + phosphate + 2 H(+). Its function is as follows. Allows the formation of correctly charged Asn-tRNA(Asn) or Gln-tRNA(Gln) through the transamidation of misacylated Asp-tRNA(Asn) or Glu-tRNA(Gln) in organisms which lack either or both of asparaginyl-tRNA or glutaminyl-tRNA synthetases. The reaction takes place in the presence of glutamine and ATP through an activated phospho-Asp-tRNA(Asn) or phospho-Glu-tRNA(Gln). This Streptococcus pyogenes serotype M1 protein is Glutamyl-tRNA(Gln) amidotransferase subunit C.